We begin with the raw amino-acid sequence, 150 residues long: Large ribosomal subunit protein uL13 (150 aa).

Residues 129–150 (PEHPHSAQRPQTLQLNPAASSQ) form a disordered region. Polar residues predominate over residues 136–150 (QRPQTLQLNPAASSQ).

It belongs to the universal ribosomal protein uL13 family. In terms of assembly, part of the 50S ribosomal subunit.

In terms of biological role, this protein is one of the early assembly proteins of the 50S ribosomal subunit, although it is not seen to bind rRNA by itself. It is important during the early stages of 50S assembly. The chain is Large ribosomal subunit protein uL13 from Prochlorococcus marinus (strain MIT 9303).